The primary structure comprises 325 residues: Brain mitochondrial carrier protein 1 (325 aa).

6 consecutive transmembrane segments (helical) span residues Gly-38 to Ala-54, Leu-112 to Leu-128, Leu-141 to Pro-161, Gly-199 to Leu-215, Val-240 to Val-256, and Gly-298 to Ile-315. 3 Solcar repeats span residues Lys-42–Leu-131, Glu-139–His-224, and Asp-233–Leu-323.

Belongs to the mitochondrial carrier (TC 2.A.29) family. As to quaternary structure, homotetramer. Mainly expressed in brain. Some expression in testis and pituitary.

It is found in the mitochondrion inner membrane. It carries out the reaction sulfite(in) + sulfate(out) = sulfite(out) + sulfate(in). The enzyme catalyses thiosulfate(in) + sulfate(out) = thiosulfate(out) + sulfate(in). It catalyses the reaction sulfate(out) + phosphate(in) = sulfate(in) + phosphate(out). The catalysed reaction is oxalate(in) + sulfate(out) = oxalate(out) + sulfate(in). It carries out the reaction malonate(in) + sulfate(out) = malonate(out) + sulfate(in). The enzyme catalyses maleate(in) + sulfate(out) = maleate(out) + sulfate(in). It catalyses the reaction (S)-malate(in) + sulfate(out) = (S)-malate(out) + sulfate(in). The catalysed reaction is (3S)-citramalate(in) + sulfate(out) = (3S)-citramalate(out) + sulfate(in). It carries out the reaction (3R)-citramalate(in) + sulfate(out) = (3R)-citramalate(out) + sulfate(in). The enzyme catalyses sulfate(out) + succinate(in) = sulfate(in) + succinate(out). It catalyses the reaction (S,S)-tartrate(in) + sulfate(out) = (S,S)-tartrate(out) + sulfate(in). The catalysed reaction is (2R,3R)-tartrate(in) + sulfate(out) = (2R,3R)-tartrate(out) + sulfate(in). It carries out the reaction D-aspartate(in) + sulfate(out) = D-aspartate(out) + sulfate(in). The enzyme catalyses L-aspartate(in) + sulfate(out) = L-aspartate(out) + sulfate(in). It catalyses the reaction sulfate(in) = sulfate(out). The catalysed reaction is phosphate(in) = phosphate(out). It carries out the reaction (S)-malate(out) = (S)-malate(in). The enzyme catalyses citrate(in) = citrate(out). It catalyses the reaction L-aspartate(out) = L-aspartate(in). The catalysed reaction is L-glutamate(out) = L-glutamate(in). It carries out the reaction H(+)(in) = H(+)(out). The enzyme catalyses chloride(in) = chloride(out). Increased activity at pH lower than 8.0. sulfate/sulfate exchange activity is inhibited strongly by pyridoxal 5'-phosphate, bathophenanthroline and the organic mercurials mersalyl, p-chloromercuribenzoate and HgCl2. Proton conductance is activated by cardiolipin and long-chain free fatty acids and inhibited by purine nucleotides ATP and ADP. Chloride ion transporter activity is inhibited by long-chain free fatty acids. Functionally, transports inorganic anions (sulfate, sulfite, thiosulfate and phosphate) and, to a lesser extent, a variety of dicarboxylates (e.g. malonate, malate and citramalate) and, even more so, aspartate and glutamate and tricarboxylates. May catalyze the export of sulfite and thiosulfate (the hydrogen sulfide degradation products) from the mitochondria, thereby modulating the level of the hydrogen sulfide. Also can mediate a very low unidirectional transport of anions including sulfate, phosphate, (S)-malate, citrate, L-aspartate and L-glutamate. Maintains oxidative balance (through uncoupling activities) and ATP production (by modifying mitochondrial membrane potential). Is able to transport protons across lipid membranes. Also exhibits transmembrane chloride transport activity to a lesser extent. May modify mitochondrial respiratory efficiency and mitochondrial oxidant production. This is Brain mitochondrial carrier protein 1 from Homo sapiens (Human).